Consider the following 1054-residue polypeptide: Translation initiation factor IF-2 (1054 aa).

Disordered stretches follow at residues 48 to 390 (RSKL…LDLD) and 409 to 458 (LARP…GTEP). The segment covering 65 to 76 (KPPSESLPPEPP) has biased composition (pro residues). The segment covering 160 to 169 (SEATQKPETV) has biased composition (polar residues). The span at 179–193 (SESAAAKASGSEPSP) shows a compositional bias: low complexity. Pro residues-rich tracts occupy residues 221 to 235 (PQKAPEPSRPSPSEA) and 304 to 316 (PTRPVAKPAPPEP). Residues 365–378 (RAARVQAKRKRSRR) are compositionally biased toward basic residues. The segment covering 421 to 437 (PPAATAAPPARPRPAAR) has biased composition (low complexity). Residues 545–718 (SRPPVVTIMG…LLVADVAELQ (174 aa)) enclose the tr-type G domain. Positions 554 to 561 (GHVDHGKT) are G1. Residue 554–561 (GHVDHGKT) coordinates GTP. Residues 579-583 (GITQR) are G2. The interval 604 to 607 (DTPG) is G3. Residues 604–608 (DTPGH) and 658–661 (NKID) each bind GTP. The G4 stretch occupies residues 658-661 (NKID). The tract at residues 694–696 (SAL) is G5.

It belongs to the TRAFAC class translation factor GTPase superfamily. Classic translation factor GTPase family. IF-2 subfamily.

It is found in the cytoplasm. Its function is as follows. One of the essential components for the initiation of protein synthesis. Protects formylmethionyl-tRNA from spontaneous hydrolysis and promotes its binding to the 30S ribosomal subunits. Also involved in the hydrolysis of GTP during the formation of the 70S ribosomal complex. This Synechococcus sp. (strain JA-2-3B'a(2-13)) (Cyanobacteria bacterium Yellowstone B-Prime) protein is Translation initiation factor IF-2.